We begin with the raw amino-acid sequence, 75 residues long: UPF0291 protein LMOf2365_1322 (75 aa).

Residues 56-75 (DPNGTDVTPHKVKQLRKNKH) are disordered. The span at 65-75 (HKVKQLRKNKH) shows a compositional bias: basic residues.

It belongs to the UPF0291 family.

It is found in the cytoplasm. This chain is UPF0291 protein LMOf2365_1322, found in Listeria monocytogenes serotype 4b (strain F2365).